We begin with the raw amino-acid sequence, 165 residues long: 2-C-methyl-D-erythritol 2,4-cyclodiphosphate synthase (165 aa).

A divalent metal cation-binding residues include Asp13 and His15. 4-CDP-2-C-methyl-D-erythritol 2-phosphate contacts are provided by residues 13–15 and 39–40; these read DRH and HS. Position 47 (His47) interacts with a divalent metal cation. 4-CDP-2-C-methyl-D-erythritol 2-phosphate is bound by residues 61 to 63 and Phe141; that span reads DIG.

It belongs to the IspF family. In terms of assembly, homotrimer. A divalent metal cation serves as cofactor.

It carries out the reaction 4-CDP-2-C-methyl-D-erythritol 2-phosphate = 2-C-methyl-D-erythritol 2,4-cyclic diphosphate + CMP. The protein operates within isoprenoid biosynthesis; isopentenyl diphosphate biosynthesis via DXP pathway; isopentenyl diphosphate from 1-deoxy-D-xylulose 5-phosphate: step 4/6. Involved in the biosynthesis of isopentenyl diphosphate (IPP) and dimethylallyl diphosphate (DMAPP), two major building blocks of isoprenoid compounds. Catalyzes the conversion of 4-diphosphocytidyl-2-C-methyl-D-erythritol 2-phosphate (CDP-ME2P) to 2-C-methyl-D-erythritol 2,4-cyclodiphosphate (ME-CPP) with a corresponding release of cytidine 5-monophosphate (CMP). This chain is 2-C-methyl-D-erythritol 2,4-cyclodiphosphate synthase, found in Thermotoga neapolitana (strain ATCC 49049 / DSM 4359 / NBRC 107923 / NS-E).